Here is a 705-residue protein sequence, read N- to C-terminus: Voltage-dependent calcium channel beta subunit-associated regulatory protein (705 aa).

The Extracellular segment spans residues 1 to 45 (MQPTATMATAATTTTTTTATVALTTSWDNATGRPTAEPDPILDNY). An N-linked (GlcNAc...) asparagine glycan is attached at Asn-29. Residues 46-66 (VLLVVVMSLFVGGTLVVLSGV) form a helical; Signal-anchor for type III membrane protein membrane-spanning segment. Topologically, residues 67-705 (LLLCKRCWDV…APTSPDHSPA (639 aa)) are cytoplasmic. 2 disordered regions span residues 91-113 (TTTY…EDPE) and 212-284 (GKAL…GSGA). Positions 245-254 (PSASSDSGEG) are enriched in polar residues. Gly residues predominate over residues 267–284 (GGPGAAAGPGEAGPGSGA). 2 positions are modified to phosphoserine: Ser-299 and Ser-304. Disordered regions lie at residues 316 to 353 (PSQR…DAPQ), 369 to 436 (FPHP…SYRD), 448 to 540 (AAAS…RRDY), and 559 to 655 (HFDD…CPGS). Over residues 344–353 (TEQEEGDAPQ) the composition is skewed to acidic residues. A compositionally biased stretch (pro residues) spans 371 to 382 (HPRPFLASPPPA). Over residues 383 to 397 (LGRLEAAEAAGGASP) the composition is skewed to low complexity. Pro residues predominate over residues 479–488 (AFPPPSPPAP). Residues 489–499 (RPKDGEARRLL) are compositionally biased toward basic and acidic residues. Phosphoserine is present on residues Ser-507 and Ser-528. Residues 567–585 (ARHRARAHPHARKQWQRGR) are compositionally biased toward basic residues. Residues 591 to 614 (GARAAPALAGTPAPPAGAARPARA) show a composition bias toward low complexity. Phosphoserine is present on Ser-621. Thr-698 is modified (phosphothreonine). A phosphoserine mark is found at Ser-699 and Ser-703.

As to quaternary structure, interacts with voltage-dependent calcium channels CACNB1, CACNB2, CACNB3 and CACNB4 beta subunits; prevents their interaction with the CACNA1C alpha subunit thereby negatively regulating the activity of the corresponding calcium channels.

It localises to the cytoplasmic vesicle. Its subcellular location is the secretory vesicle. The protein localises to the synaptic vesicle membrane. It is found in the cell membrane. The protein resides in the cell projection. It localises to the growth cone. Its function is as follows. Negatively regulates voltage-gated calcium channels by preventing the interaction between their alpha and beta subunits. Thereby, negatively regulates calcium channels activity at the plasma membrane and indirectly inhibits calcium-regulated exocytosis. The protein is Voltage-dependent calcium channel beta subunit-associated regulatory protein of Homo sapiens (Human).